The following is a 323-amino-acid chain: Pantothenate kinase (323 aa).

101–108 contributes to the ATP binding site; the sequence is GSVAVGKS.

This sequence belongs to the prokaryotic pantothenate kinase family.

The protein localises to the cytoplasm. The catalysed reaction is (R)-pantothenate + ATP = (R)-4'-phosphopantothenate + ADP + H(+). Its pathway is cofactor biosynthesis; coenzyme A biosynthesis; CoA from (R)-pantothenate: step 1/5. The chain is Pantothenate kinase from Paenarthrobacter aurescens (strain TC1).